The sequence spans 153 residues: Endoribonuclease YbeY (153 aa).

His114, His118, and His124 together coordinate Zn(2+).

Belongs to the endoribonuclease YbeY family. Requires Zn(2+) as cofactor.

The protein resides in the cytoplasm. In terms of biological role, single strand-specific metallo-endoribonuclease involved in late-stage 70S ribosome quality control and in maturation of the 3' terminus of the 16S rRNA. The polypeptide is Endoribonuclease YbeY (Shewanella denitrificans (strain OS217 / ATCC BAA-1090 / DSM 15013)).